Here is a 347-residue protein sequence, read N- to C-terminus: N-acetyl-gamma-glutamyl-phosphate reductase (347 aa).

The active site involves cysteine 151.

Belongs to the NAGSA dehydrogenase family. Type 1 subfamily.

It is found in the cytoplasm. The catalysed reaction is N-acetyl-L-glutamate 5-semialdehyde + phosphate + NADP(+) = N-acetyl-L-glutamyl 5-phosphate + NADPH + H(+). It functions in the pathway amino-acid biosynthesis; L-arginine biosynthesis; N(2)-acetyl-L-ornithine from L-glutamate: step 3/4. Catalyzes the NADPH-dependent reduction of N-acetyl-5-glutamyl phosphate to yield N-acetyl-L-glutamate 5-semialdehyde. In Corynebacterium diphtheriae (strain ATCC 700971 / NCTC 13129 / Biotype gravis), this protein is N-acetyl-gamma-glutamyl-phosphate reductase.